The chain runs to 2567 residues: Unconventional myosin-XVIIIb (2567 aa).

Residues 41-508 (LVRGTEKEAK…SRDSDQAPED (468 aa)) form a disordered region. The span at 44–54 (GTEKEAKEARQ) shows a compositional bias: basic and acidic residues. Positions 71 to 104 (SISQPNSKSSSGTRSGSQQISQDDQSSSPGSSDI) are enriched in low complexity. Basic and acidic residues-rich tracts occupy residues 105–116 (LGKESEGSRSPD) and 160–176 (LDPD…HDAP). Polar residues predominate over residues 196–206 (SRTPCGSQAST). Composition is skewed to basic and acidic residues over residues 251–265 (TELK…DRQG), 278–287 (RPGKAEKEGA), and 326–349 (SKWD…EKTG). Residues 350 to 362 (EPQTQMEKTSQVQ) are compositionally biased toward polar residues. Composition is skewed to basic and acidic residues over residues 367–377 (DDLRMGEKAGE), 410–420 (SQTEKGCEAPK), 471–485 (LEKD…KENQ), and 492–508 (EEGK…APED). The Myosin motor domain occupies 571-1333 (DQVEDLASLI…VISRLEKQRE (763 aa)). An ATP-binding site is contributed by 660 to 667 (GWSGAGKT). Positions 1208–1232 (VESRSGQESPPPPQPGRDKPGAGGP) are disordered. The GPA stretch occupies residues 1213–1240 (GQESPPPPQPGRDKPGAGGPLALDIPAL). Residue serine 1216 is modified to Phosphoserine. The IQ domain occupies 1336-1365 (VSQSIVLFQAACKGFLSRQEFKKLKIRRLA). Coiled coils occupy residues 1396-1783 (SATI…GLIG), 1825-1961 (KTSV…STVD), and 2014-2090 (ESQQ…VASS). A tail region spans residues 1426–2083 (NELRQNTDLL…IRRIADLQAA (658 aa)). The residue at position 1829 (serine 1829) is a Phosphoserine. Residues 2139 to 2153 (TMRTPSRQSATSSRI) show a composition bias toward polar residues. Disordered regions lie at residues 2139-2194 (TMRT…PVSP) and 2217-2249 (STER…PSAA). Basic and acidic residues predominate over residues 2158 to 2167 (INEEAGDTER). The segment covering 2168-2185 (TQSALALSRARSTNVHSK) has biased composition (polar residues). Serine 2193 carries the phosphoserine modification. The span at 2227–2238 (PLASRSTNTSPL) shows a compositional bias: polar residues. 2 positions are modified to phosphoserine: serine 2296 and serine 2309. A disordered region spans residues 2357-2376 (SRPSMGRKLSSPTTPRDMLL). Position 2377 is a phosphoserine (serine 2377). Disordered stretches follow at residues 2444-2471 (FLPA…SQRS) and 2494-2567 (KSPE…YLQK). Positions 2494–2504 (KSPEPKEDPAH) are enriched in basic and acidic residues. Positions 2506-2520 (SDSSSSSGSIVSFKS) are enriched in low complexity. The span at 2537–2556 (GGERTSPERREPGTGRKDDD) shows a compositional bias: basic and acidic residues.

The protein belongs to the TRAFAC class myosin-kinesin ATPase superfamily. Myosin family. Homodimer. May interact with F actin through the GPA motif (Gly/Pro/Ala-rich). As to expression, selectively expressed in cardiac and skeletal muscles. Weakly expressed in testis, pancreas, placenta, prostate, lung and thymus.

It localises to the cytoplasm. It is found in the nucleus. The protein localises to the myofibril. The protein resides in the sarcomere. Its function is as follows. May be involved in intracellular trafficking of the muscle cell when in the cytoplasm, whereas entering the nucleus, may be involved in the regulation of muscle specific genes. May play a role in the control of tumor development and progression; restored MYO18B expression in lung cancer cells suppresses anchorage-independent growth. The polypeptide is Unconventional myosin-XVIIIb (MYO18B) (Homo sapiens (Human)).